A 365-amino-acid chain; its full sequence is Phospho-N-acetylmuramoyl-pentapeptide-transferase (365 aa).

A run of 9 helical transmembrane segments spans residues 47–67 (LLAL…VVPL), 92–112 (PTMG…ILAG), 114–134 (SPLV…GWLD), 153–173 (LCLQ…QQGW), 180–200 (ITLP…LAVF), 215–235 (LDGL…LWLA), 239–259 (PAIA…LLHN), 281–301 (AIAI…LFVL), and 344–364 (TQVV…CWLL).

Belongs to the glycosyltransferase 4 family. MraY subfamily. Mg(2+) is required as a cofactor.

It localises to the cell inner membrane. The catalysed reaction is UDP-N-acetyl-alpha-D-muramoyl-L-alanyl-gamma-D-glutamyl-meso-2,6-diaminopimeloyl-D-alanyl-D-alanine + di-trans,octa-cis-undecaprenyl phosphate = di-trans,octa-cis-undecaprenyl diphospho-N-acetyl-alpha-D-muramoyl-L-alanyl-D-glutamyl-meso-2,6-diaminopimeloyl-D-alanyl-D-alanine + UMP. It participates in cell wall biogenesis; peptidoglycan biosynthesis. Catalyzes the initial step of the lipid cycle reactions in the biosynthesis of the cell wall peptidoglycan: transfers peptidoglycan precursor phospho-MurNAc-pentapeptide from UDP-MurNAc-pentapeptide onto the lipid carrier undecaprenyl phosphate, yielding undecaprenyl-pyrophosphoryl-MurNAc-pentapeptide, known as lipid I. This chain is Phospho-N-acetylmuramoyl-pentapeptide-transferase, found in Synechococcus elongatus (strain ATCC 33912 / PCC 7942 / FACHB-805) (Anacystis nidulans R2).